A 461-amino-acid polypeptide reads, in one-letter code: Vimentin (461 aa).

Composition is skewed to low complexity over residues 1–14 and 35–52; these read MNRT…SSSS and SSRQ…SYSV. Residues 1-52 are disordered; the sequence is MNRTTSRQTTSSSSYKRMFGGEGRPSVGMARSTLSSRQYSSPVRSSRMSYSV. Positions 1–91 are head; sequence MNRTTSRQTT…FALSDAINSE (91 aa). The interval 92–127 is coil 1A; that stretch reads FKANRTNEKAEMQHLNDRFASYIDKVRFLEQQNKIL. A coiled-coil region spans residues 92–127; it reads FKANRTNEKAEMQHLNDRFASYIDKVRFLEQQNKIL. One can recognise an IF rod domain in the interval 99-407; it reads EKAEMQHLND…KLLEGEESRI (309 aa). A linker 1 region spans residues 128–149; sequence LAELEQLKGKGASRIGDLYEDE. A coiled-coil region spans residues 150 to 241; that stretch reads MRDLRRQVDQ…KLHDEEVAEL (92 aa). The coil 1B stretch occupies residues 150–241; that stretch reads MRDLRRQVDQ…KLHDEEVAEL (92 aa). Residues 242 to 264 form a linker 12 region; that stretch reads QAQIQDQHVQIDMDVAKPDLTAA. The segment at 265–403 is coil 2; it reads LRDVRVQYET…ATYRKLLEGE (139 aa). Positions 299–403 form a coiled coil; it reads NRNTDAIRQA…ATYRKLLEGE (105 aa). Residues 404–461 are tail; the sequence is ESRITTPMPNFSSFNLRESMLEARPMIDNLSKKVVIKTIETRDGHVINESTQNHDDLE.

Belongs to the intermediate filament family. As to quaternary structure, homomer assembled from elementary dimers. Post-translationally, one of the most prominent phosphoproteins in various cells of mesenchymal origin. Phosphorylation is enhanced during cell division, at which time vimentin filaments are significantly reorganized.

It localises to the cytoplasm. The protein resides in the cytoskeleton. Its subcellular location is the nucleus matrix. Its function is as follows. Vimentins are class-III intermediate filaments found in various non-epithelial cells, especially mesenchymal cells. Vimentin is attached to the nucleus, endoplasmic reticulum, and mitochondria, either laterally or terminally. The chain is Vimentin (vim) from Oncorhynchus mykiss (Rainbow trout).